The sequence spans 602 residues: Glutamine--fructose-6-phosphate aminotransferase [isomerizing] (602 aa).

The Nucleophile; for GATase activity role is filled by Cys-2. One can recognise a Glutamine amidotransferase type-2 domain in the interval 2 to 217 (CGIVGVVGNT…DQELVIVKAD (216 aa)). A disordered region spans residues 67–87 (IGHTRWATHGKPTEDNAHPHR). A compositionally biased stretch (basic and acidic residues) spans 77–87 (KPTEDNAHPHR). SIS domains follow at residues 283–422 (IIKA…ANGN) and 455–592 (VREL…VDKP). Lys-597 acts as the For Fru-6P isomerization activity in catalysis.

In terms of assembly, homodimer.

Its subcellular location is the cytoplasm. It catalyses the reaction D-fructose 6-phosphate + L-glutamine = D-glucosamine 6-phosphate + L-glutamate. In terms of biological role, catalyzes the first step in hexosamine metabolism, converting fructose-6P into glucosamine-6P using glutamine as a nitrogen source. The protein is Glutamine--fructose-6-phosphate aminotransferase [isomerizing] of Streptococcus pneumoniae (strain ATCC BAA-255 / R6).